The sequence spans 116 residues: Large ribosomal subunit protein uL18 (116 aa).

This sequence belongs to the universal ribosomal protein uL18 family. Part of the 50S ribosomal subunit; part of the 5S rRNA/L5/L18/L25 subcomplex. Contacts the 5S and 23S rRNAs.

Functionally, this is one of the proteins that bind and probably mediate the attachment of the 5S RNA into the large ribosomal subunit, where it forms part of the central protuberance. In Pseudoalteromonas translucida (strain TAC 125), this protein is Large ribosomal subunit protein uL18.